We begin with the raw amino-acid sequence, 341 residues long: HTH-type transcriptional repressor PurR (341 aa).

An HTH lacI-type domain is found at 2-56 (ATIKDVAKRAGVSTTTVSHVINKTRFVAEETKAAVRAAIKELHYSPSAVARSLKV). The H-T-H motif DNA-binding region spans 4-23 (IKDVAKRAGVSTTTVSHVIN). The DNA-binding element occupies 48 to 56 (SAVARSLKV). Residues tyrosine 73, arginine 190, threonine 192, phenylalanine 221, and aspartate 275 each contribute to the hypoxanthine site.

As to quaternary structure, homodimer.

It participates in purine metabolism; purine nucleotide biosynthesis [regulation]. Is the main repressor of the genes involved in the de novo synthesis of purine nucleotides, regulating purB, purC, purEK, purF, purHD, purL, purMN and guaBA expression. PurR is allosterically activated to bind its cognate DNA by binding the purine corepressors, hypoxanthine or guanine, thereby effecting transcription repression. This Pectobacterium atrosepticum (strain SCRI 1043 / ATCC BAA-672) (Erwinia carotovora subsp. atroseptica) protein is HTH-type transcriptional repressor PurR.